Here is a 368-residue protein sequence, read N- to C-terminus: Phospho-N-acetylmuramoyl-pentapeptide-transferase (368 aa).

9 helical membrane-spanning segments follow: residues 2 to 22, 51 to 71, 80 to 100, 117 to 137, 167 to 187, 193 to 213, 234 to 254, 271 to 291, and 340 to 360; these read IALI…TPLL, TLGG…SALY, PSWS…LGFI, GGKF…ALLI, VAII…TNAV, LDGL…IIAF, PLDL…FLWY, LGGL…AVVL, and FWMI…GDWV.

This sequence belongs to the glycosyltransferase 4 family. MraY subfamily. Mg(2+) serves as cofactor.

The protein resides in the cell membrane. The enzyme catalyses UDP-N-acetyl-alpha-D-muramoyl-L-alanyl-gamma-D-glutamyl-meso-2,6-diaminopimeloyl-D-alanyl-D-alanine + di-trans,octa-cis-undecaprenyl phosphate = di-trans,octa-cis-undecaprenyl diphospho-N-acetyl-alpha-D-muramoyl-L-alanyl-D-glutamyl-meso-2,6-diaminopimeloyl-D-alanyl-D-alanine + UMP. It functions in the pathway cell wall biogenesis; peptidoglycan biosynthesis. Catalyzes the initial step of the lipid cycle reactions in the biosynthesis of the cell wall peptidoglycan: transfers peptidoglycan precursor phospho-MurNAc-pentapeptide from UDP-MurNAc-pentapeptide onto the lipid carrier undecaprenyl phosphate, yielding undecaprenyl-pyrophosphoryl-MurNAc-pentapeptide, known as lipid I. This Bifidobacterium longum (strain DJO10A) protein is Phospho-N-acetylmuramoyl-pentapeptide-transferase.